Reading from the N-terminus, the 549-residue chain is Thermosome subunit alpha (549 aa).

The disordered stretch occupies residues 529 to 549 (EGRQGAECPPNGCMGGMDMRM).

Belongs to the TCP-1 chaperonin family. As to quaternary structure, forms a Heterooligomeric complex of two stacked eight-membered rings.

Molecular chaperone; binds unfolded polypeptides in vitro, and has a weak ATPase activity. The chain is Thermosome subunit alpha (thsA) from Thermococcus sp. (strain KS-8).